Consider the following 356-residue polypeptide: DNA polymerase IV (356 aa).

The 182-residue stretch at isoleucine 7–glycine 188 folds into the UmuC domain. Aspartate 11 and aspartate 106 together coordinate Mg(2+). Residue glutamate 107 is part of the active site.

This sequence belongs to the DNA polymerase type-Y family. Monomer. It depends on Mg(2+) as a cofactor.

The protein localises to the cytoplasm. It carries out the reaction DNA(n) + a 2'-deoxyribonucleoside 5'-triphosphate = DNA(n+1) + diphosphate. In terms of biological role, poorly processive, error-prone DNA polymerase involved in untargeted mutagenesis. Copies undamaged DNA at stalled replication forks, which arise in vivo from mismatched or misaligned primer ends. These misaligned primers can be extended by PolIV. Exhibits no 3'-5' exonuclease (proofreading) activity. May be involved in translesional synthesis, in conjunction with the beta clamp from PolIII. The protein is DNA polymerase IV of Listeria welshimeri serovar 6b (strain ATCC 35897 / DSM 20650 / CCUG 15529 / CIP 8149 / NCTC 11857 / SLCC 5334 / V8).